Reading from the N-terminus, the 221-residue chain is ATP-dependent dethiobiotin synthetase BioD (221 aa).

12–17 (EVGKTV) contributes to the ATP binding site. Threonine 16 contacts Mg(2+). Residue lysine 39 is part of the active site. Threonine 43 provides a ligand contact to substrate. Residues aspartate 47, 105 to 108 (EGLG), and 165 to 166 (SC) contribute to the ATP site. Residues aspartate 47 and glutamate 105 each coordinate Mg(2+).

It belongs to the dethiobiotin synthetase family. Homodimer. Requires Mg(2+) as cofactor.

Its subcellular location is the cytoplasm. The enzyme catalyses (7R,8S)-7,8-diammoniononanoate + CO2 + ATP = (4R,5S)-dethiobiotin + ADP + phosphate + 3 H(+). It carries out the reaction (7R,8S)-8-amino-7-(carboxyamino)nonanoate + ATP = (4R,5S)-dethiobiotin + ADP + phosphate + H(+). It functions in the pathway cofactor biosynthesis; biotin biosynthesis; biotin from 7,8-diaminononanoate: step 1/2. In terms of biological role, catalyzes a mechanistically unusual reaction, the ATP-dependent insertion of CO2 between the N7 and N8 nitrogen atoms of 7,8-diaminopelargonic acid (DAPA, also called 7,8-diammoniononanoate) to form a ureido ring. This cyanobacterium does not encode bioA (which catalyzes the formation of the precursor for this reaction in the cannonical pathway), instead it encodes bioU, which replaces bioA and also performs the first half of the cannonical BioD reaction. Thus in this organism BioD has a different substrate. This Crocosphaera subtropica (strain ATCC 51142 / BH68) (Cyanothece sp. (strain ATCC 51142)) protein is ATP-dependent dethiobiotin synthetase BioD.